The following is a 1241-amino-acid chain: Plasma membrane calcium-transporting ATPase 4 (1241 aa).

At 1-92 the chain is on the cytoplasmic side; sequence MTNPSDRVLP…NVIPPKKPKT (92 aa). Position 13 is a phosphoserine (Ser-13). The helical transmembrane segment at 93–113 threads the bilayer; sequence FLELVWEALQDVTLIILEIAA. Over 114-150 the chain is Extracellular; that stretch reads IISLVLSFYRPAGEENELCGQVATTPEDENEAQAGWI. The helical transmembrane segment at 151-171 threads the bilayer; sequence EGAAILFSVIIVVLVTAFNDW. The Cytoplasmic segment spans residues 172–356; the sequence is SKEKQFRGLQ…KEKSVLQGKL (185 aa). The tract at residues 294–318 is disordered; it reads EGEKKKKGKKQGVPENRNKAKTQDG. Ser-328 carries the post-translational modification Phosphoserine. The chain crosses the membrane as a helical span at residues 357 to 376; the sequence is TRLAVQIGKAGLLMSALTVF. Over 377–409 the chain is Extracellular; it reads ILILYFVIDNFVINRRPWLPECTPIYIQYFVKF. Residues 410-427 form a helical membrane-spanning segment; sequence FIIGITVLVVAVPEGLPL. Topologically, residues 428–840 are cytoplasmic; sequence AVTISLAYSV…MWGRNVYDSI (413 aa). Asp-465 functions as the 4-aspartylphosphate intermediate in the catalytic mechanism. Residues Asp-785 and Asp-789 each contribute to the Mg(2+) site. The helical transmembrane segment at 841–860 threads the bilayer; that stretch reads SKFLQFQLTVNVVAVIVAFT. The Extracellular segment spans residues 861 to 870; the sequence is GACITQDSPL. Residues 871 to 891 form a helical membrane-spanning segment; it reads KAVQMLWVNLIMDTFASLALA. The Cytoplasmic portion of the chain corresponds to 892–911; that stretch reads TEPPTESLLKRRPYGRNKPL. Residues 912 to 934 form a helical membrane-spanning segment; that stretch reads ISRTMMKNILGHAFYQLIVIFIL. At 935–952 the chain is on the extracellular side; it reads VFAGEKFFDIDSGRKAPL. The helical transmembrane segment at 953-974 threads the bilayer; it reads HSPPSQHYTIVFNTFVLMQLFN. Residues 975 to 993 are Cytoplasmic-facing; sequence EINSRKIHGEKNVFSGIYR. A helical transmembrane segment spans residues 994-1015; sequence NIIFCSVVLGTFICQIFIVEFG. Residues 1016–1025 are Extracellular-facing; the sequence is GKPFSCTSLS. A helical membrane pass occupies residues 1026–1047; that stretch reads LSQWLWCLFIGIGELLWGQFIS. Over 1048-1241 the chain is Cytoplasmic; it reads AIPTRSLKFL…SSLQSLETSV (194 aa). The segment at 1086–1103 is calmodulin-binding subdomain A; it reads LRRGQILWFRGLNRIQTQ. Thr-1102 bears the Phosphothreonine; by PKC mark. The calmodulin-binding subdomain B stretch occupies residues 1104–1113; sequence IDVINTFQTG.

It belongs to the cation transport ATPase (P-type) (TC 3.A.3) family. Type IIB subfamily. In terms of assembly, interacts with PDZD11. Interacts with SLC35G1 and STIM1. Interacts with calmodulin. In terms of tissue distribution, isoform XB is the most abundant isoform and is expressed ubiquitously. Isoforms containing segment Z have only been detected in heart, while isoforms containing segment a have been found in heart, stomach and brain cortex.

The protein resides in the cell membrane. It is found in the cell projection. It localises to the cilium. The protein localises to the flagellum membrane. The catalysed reaction is Ca(2+)(in) + ATP + H2O = Ca(2+)(out) + ADP + phosphate + H(+). Activated by calcium/calmodulin. Functionally, calcium/calmodulin-regulated and magnesium-dependent enzyme that catalyzes the hydrolysis of ATP coupled with the transport of calcium out of the cell. By regulating sperm cell calcium homeostasis, may play a role in sperm motility. The sequence is that of Plasma membrane calcium-transporting ATPase 4 from Homo sapiens (Human).